Here is a 234-residue protein sequence, read N- to C-terminus: Purine nucleoside phosphorylase DeoD-type (234 aa).

Position 4 (H4) interacts with a purine D-ribonucleoside. Phosphate is bound by residues G20, R24, R43, and 87–90 (RIGS). A purine D-ribonucleoside is bound by residues E162, 179-181 (EME), and 203-204 (SD). D204 serves as the catalytic Proton donor.

The protein belongs to the PNP/UDP phosphorylase family. In terms of assembly, homohexamer; trimer of homodimers.

The enzyme catalyses a purine D-ribonucleoside + phosphate = a purine nucleobase + alpha-D-ribose 1-phosphate. It carries out the reaction a purine 2'-deoxy-D-ribonucleoside + phosphate = a purine nucleobase + 2-deoxy-alpha-D-ribose 1-phosphate. Its function is as follows. Catalyzes the reversible phosphorolytic breakdown of the N-glycosidic bond in the beta-(deoxy)ribonucleoside molecules, with the formation of the corresponding free purine bases and pentose-1-phosphate. This chain is Purine nucleoside phosphorylase DeoD-type, found in Roseobacter denitrificans (strain ATCC 33942 / OCh 114) (Erythrobacter sp. (strain OCh 114)).